Here is a 557-residue protein sequence, read N- to C-terminus: Acetylcholine receptor subunit alpha-L1 (557 aa).

The first 23 residues, Met-1–Ala-23, serve as a signal peptide directing secretion. Over Asn-24–Phe-244 the chain is Extracellular. Asn-47 carries N-linked (GlcNAc...) asparagine glycosylation. Disulfide bonds link Cys-151–Cys-165 and Cys-224–Cys-225. Asn-235 carries an N-linked (GlcNAc...) asparagine glycan. The next 3 helical transmembrane spans lie at Tyr-245–Leu-266, Ile-274–Ile-294, and Tyr-308–Val-329. At His-330–Gly-500 the chain is on the cytoplasmic side. The chain crosses the membrane as a helical span at residues Phe-501–Phe-523.

Belongs to the ligand-gated ion channel (TC 1.A.9) family. Acetylcholine receptor (TC 1.A.9.1) subfamily.

Its subcellular location is the postsynaptic cell membrane. It localises to the cell membrane. Its function is as follows. After binding acetylcholine, the AChR responds by an extensive change in conformation that affects all subunits and leads to opening of an ion-conducting channel across the plasma membrane. The chain is Acetylcholine receptor subunit alpha-L1 from Schistocerca gregaria (Desert locust).